Reading from the N-terminus, the 84-residue chain is Small ribosomal subunit protein bS20 (84 aa).

Belongs to the bacterial ribosomal protein bS20 family.

Functionally, binds directly to 16S ribosomal RNA. This chain is Small ribosomal subunit protein bS20, found in Azobacteroides pseudotrichonymphae genomovar. CFP2.